Here is a 361-residue protein sequence, read N- to C-terminus: Uroporphyrinogen decarboxylase (361 aa).

Residues 27–31 (RQAGR), Asp-77, Tyr-154, Thr-209, and His-327 each bind substrate.

Belongs to the uroporphyrinogen decarboxylase family. Homodimer.

The protein localises to the cytoplasm. The catalysed reaction is uroporphyrinogen III + 4 H(+) = coproporphyrinogen III + 4 CO2. It functions in the pathway porphyrin-containing compound metabolism; protoporphyrin-IX biosynthesis; coproporphyrinogen-III from 5-aminolevulinate: step 4/4. Catalyzes the decarboxylation of four acetate groups of uroporphyrinogen-III to yield coproporphyrinogen-III. This chain is Uroporphyrinogen decarboxylase, found in Coxiella burnetii (strain Dugway 5J108-111).